The primary structure comprises 409 residues: Tryptophan synthase beta chain (409 aa).

An N6-(pyridoxal phosphate)lysine modification is found at lysine 95.

The protein belongs to the TrpB family. Tetramer of two alpha and two beta chains. It depends on pyridoxal 5'-phosphate as a cofactor.

It carries out the reaction (1S,2R)-1-C-(indol-3-yl)glycerol 3-phosphate + L-serine = D-glyceraldehyde 3-phosphate + L-tryptophan + H2O. It functions in the pathway amino-acid biosynthesis; L-tryptophan biosynthesis; L-tryptophan from chorismate: step 5/5. In terms of biological role, the beta subunit is responsible for the synthesis of L-tryptophan from indole and L-serine. The sequence is that of Tryptophan synthase beta chain from Pseudomonas savastanoi pv. phaseolicola (Pseudomonas syringae pv. phaseolicola).